The chain runs to 310 residues: Ribosomal RNA small subunit methyltransferase H (310 aa).

Residues 32 to 34 (GGH), Asp-52, Phe-79, Asp-100, and Gln-107 contribute to the S-adenosyl-L-methionine site.

The protein belongs to the methyltransferase superfamily. RsmH family.

Its subcellular location is the cytoplasm. It catalyses the reaction cytidine(1402) in 16S rRNA + S-adenosyl-L-methionine = N(4)-methylcytidine(1402) in 16S rRNA + S-adenosyl-L-homocysteine + H(+). Functionally, specifically methylates the N4 position of cytidine in position 1402 (C1402) of 16S rRNA. The polypeptide is Ribosomal RNA small subunit methyltransferase H (Bacillus thuringiensis subsp. konkukian (strain 97-27)).